A 406-amino-acid chain; its full sequence is Corticosteroid-binding globulin (406 aa).

The N-terminal stretch at 1–22 (MPLLLYTCLLWLLSSGLWTVQA) is a signal peptide. Residues asparagine 31 and asparagine 96 are each glycosylated (N-linked (GlcNAc...) asparagine). Residue glutamine 255 participates in cortisol binding. N-linked (GlcNAc...) asparagine glycosylation is present at asparagine 261. Aspartate 287 serves as a coordination point for cortisol. Asparagine 331 and asparagine 360 each carry an N-linked (GlcNAc...) asparagine glycan. Residue tryptophan 394 participates in cortisol binding.

Belongs to the serpin family. Expressed by the liver; secreted in plasma.

The protein resides in the secreted. Major transport protein for glucocorticoids and progestins in the blood of almost all vertebrate species. In Saimiri sciureus (Common squirrel monkey), this protein is Corticosteroid-binding globulin (SERPINA6).